The following is a 440-amino-acid chain: Thymidine phosphorylase (440 aa).

It belongs to the thymidine/pyrimidine-nucleoside phosphorylase family. Homodimer.

The catalysed reaction is thymidine + phosphate = 2-deoxy-alpha-D-ribose 1-phosphate + thymine. It participates in pyrimidine metabolism; dTMP biosynthesis via salvage pathway; dTMP from thymine: step 1/2. The enzymes which catalyze the reversible phosphorolysis of pyrimidine nucleosides are involved in the degradation of these compounds and in their utilization as carbon and energy sources, or in the rescue of pyrimidine bases for nucleotide synthesis. The chain is Thymidine phosphorylase from Salmonella choleraesuis (strain SC-B67).